The chain runs to 131 residues: Small ribosomal subunit protein uS8 (131 aa).

Belongs to the universal ribosomal protein uS8 family. In terms of assembly, part of the 30S ribosomal subunit. Contacts proteins S5 and S12.

One of the primary rRNA binding proteins, it binds directly to 16S rRNA central domain where it helps coordinate assembly of the platform of the 30S subunit. The protein is Small ribosomal subunit protein uS8 of Shewanella amazonensis (strain ATCC BAA-1098 / SB2B).